The sequence spans 181 residues: Mitochondrial pyruvate carrier-like protein (181 aa).

2 consecutive transmembrane segments (helical) span residues 23–42 (YLASTHFWGPVANWGLPLAA) and 52–74 (IISGRMTTALIFYSMAFMRFAYR). The tract at residues 125–154 (TGSVDSSATSTGSVDSSATSTGSVDSSAAT) is disordered.

Belongs to the mitochondrial pyruvate carrier (MPC) (TC 2.A.105) family.

It localises to the mitochondrion inner membrane. Functionally, may mediate the uptake of pyruvate into mitochondria. The polypeptide is Mitochondrial pyruvate carrier-like protein (Bos taurus (Bovine)).